The chain runs to 293 residues: AKT-interacting protein (293 aa).

Residues 1–11 (MNPFWSMSTNA) are compositionally biased toward polar residues. The interval 1 to 44 (MNPFWSMSTNAGRKRSDGEEQSGSGEQRASPARPPFGKKQLPSI) is disordered. Positions 75–223 (YLEYSLLAEF…VVDSVKLCNS (149 aa)) constitute a UBC core domain. A disordered region spans residues 260-293 (RPEDFNKGLPVSGLSWVKPGSTQPFSKEDNPLQT).

This sequence belongs to the ubiquitin-conjugating enzyme family. FTS subfamily.

The protein localises to the cytoplasm. It is found in the cell membrane. In terms of biological role, may function to promote vesicle trafficking and/or fusion. May also regulate apoptosis. This is AKT-interacting protein (aktip) from Danio rerio (Zebrafish).